A 233-amino-acid chain; its full sequence is Putative N-acetylmannosamine-6-phosphate 2-epimerase (233 aa).

This sequence belongs to the NanE family.

The enzyme catalyses an N-acyl-D-glucosamine 6-phosphate = an N-acyl-D-mannosamine 6-phosphate. The protein operates within amino-sugar metabolism; N-acetylneuraminate degradation; D-fructose 6-phosphate from N-acetylneuraminate: step 3/5. Its function is as follows. Converts N-acetylmannosamine-6-phosphate (ManNAc-6-P) to N-acetylglucosamine-6-phosphate (GlcNAc-6-P). The sequence is that of Putative N-acetylmannosamine-6-phosphate 2-epimerase from Yersinia pseudotuberculosis serotype IB (strain PB1/+).